Reading from the N-terminus, the 301-residue chain is Protoheme IX farnesyltransferase (301 aa).

Transmembrane regions (helical) follow at residues 29–49 (VVAL…PGVV), 51–71 (IVPL…AAAF), 96–118 (VSIA…VLYV), 123–143 (LTAW…TAYL), 151–171 (IVVG…AVTG), 177–197 (ALLL…ALAI), 223–243 (CIFL…LVGM), 244–264 (CGPV…YKAW), and 281–301 (FSIY…YLWL).

It belongs to the UbiA prenyltransferase family. Protoheme IX farnesyltransferase subfamily.

It localises to the cell inner membrane. The catalysed reaction is heme b + (2E,6E)-farnesyl diphosphate + H2O = Fe(II)-heme o + diphosphate. The protein operates within porphyrin-containing compound metabolism; heme O biosynthesis; heme O from protoheme: step 1/1. In terms of biological role, converts heme B (protoheme IX) to heme O by substitution of the vinyl group on carbon 2 of heme B porphyrin ring with a hydroxyethyl farnesyl side group. In Shewanella halifaxensis (strain HAW-EB4), this protein is Protoheme IX farnesyltransferase.